Consider the following 214-residue polypeptide: Outer-membrane lipoprotein LolB (214 aa).

The N-terminal stretch at 1–30 (MKHVSSPHPCAAIASARVWLGLVLVALLAG) is a signal peptide. C31 carries the N-palmitoyl cysteine lipid modification. The S-diacylglycerol cysteine moiety is linked to residue C31.

It belongs to the LolB family. In terms of assembly, monomer.

It localises to the cell outer membrane. In terms of biological role, plays a critical role in the incorporation of lipoproteins in the outer membrane after they are released by the LolA protein. This is Outer-membrane lipoprotein LolB from Chromohalobacter salexigens (strain ATCC BAA-138 / DSM 3043 / CIP 106854 / NCIMB 13768 / 1H11).